The sequence spans 456 residues: Tyrosine phenol-lyase (456 aa).

The residue at position 257 (Lys-257) is an N6-(pyridoxal phosphate)lysine.

This sequence belongs to the beta-eliminating lyase family. In terms of assembly, homotetramer. Requires pyridoxal 5'-phosphate as cofactor. Contains L-DOPA (3',4'-dihydroxyphenylalanine).

Its subcellular location is the cytoplasm. It carries out the reaction L-tyrosine + H2O = phenol + pyruvate + NH4(+). The chain is Tyrosine phenol-lyase (tpl) from Enterobacter agglomerans (Erwinia herbicola).